The primary structure comprises 503 residues: ATP synthase subunit alpha (503 aa).

170–177 is an ATP binding site; that stretch reads GDRQTGKT.

This sequence belongs to the ATPase alpha/beta chains family. In terms of assembly, F-type ATPases have 2 components, CF(1) - the catalytic core - and CF(0) - the membrane proton channel. CF(1) has five subunits: alpha(3), beta(3), gamma(1), delta(1), epsilon(1). CF(0) has three main subunits: a(1), b(2) and c(9-12). The alpha and beta chains form an alternating ring which encloses part of the gamma chain. CF(1) is attached to CF(0) by a central stalk formed by the gamma and epsilon chains, while a peripheral stalk is formed by the delta and b chains.

It is found in the cell inner membrane. The catalysed reaction is ATP + H2O + 4 H(+)(in) = ADP + phosphate + 5 H(+)(out). In terms of biological role, produces ATP from ADP in the presence of a proton gradient across the membrane. The alpha chain is a regulatory subunit. The protein is ATP synthase subunit alpha of Thermotoga neapolitana (strain ATCC 49049 / DSM 4359 / NBRC 107923 / NS-E).